The following is a 675-amino-acid chain: Methionine--tRNA ligase (675 aa).

The 'HIGH' region motif lies at 15–25; that stretch reads PYANGSIHLGH. Cysteine 146, cysteine 149, cysteine 159, and cysteine 162 together coordinate Zn(2+). A 'KMSKS' region motif is present at residues 331–335; the sequence is KMSKS. Lysine 334 contacts ATP. A tRNA-binding domain is found at 574–675; the sequence is DFAKIDLRIA…EGAQPGMKVK (102 aa).

It belongs to the class-I aminoacyl-tRNA synthetase family. MetG type 1 subfamily. In terms of assembly, homodimer. The cofactor is Zn(2+).

The protein resides in the cytoplasm. It carries out the reaction tRNA(Met) + L-methionine + ATP = L-methionyl-tRNA(Met) + AMP + diphosphate. Its function is as follows. Is required not only for elongation of protein synthesis but also for the initiation of all mRNA translation through initiator tRNA(fMet) aminoacylation. The protein is Methionine--tRNA ligase of Pseudoalteromonas atlantica (strain T6c / ATCC BAA-1087).